Here is a 109-residue protein sequence, read N- to C-terminus: Flagellar hook-basal body complex protein FliE (109 aa).

It belongs to the FliE family.

It localises to the bacterial flagellum basal body. The chain is Flagellar hook-basal body complex protein FliE from Stutzerimonas stutzeri (strain A1501) (Pseudomonas stutzeri).